A 361-amino-acid chain; its full sequence is Mannonate dehydratase 1 (361 aa).

The protein belongs to the mannonate dehydratase family. The cofactor is Fe(2+). It depends on Mn(2+) as a cofactor.

The catalysed reaction is D-mannonate = 2-dehydro-3-deoxy-D-gluconate + H2O. Its pathway is carbohydrate metabolism; pentose and glucuronate interconversion. In terms of biological role, catalyzes the dehydration of D-mannonate. This is Mannonate dehydratase 1 (uxuA1) from Halalkalibacterium halodurans (strain ATCC BAA-125 / DSM 18197 / FERM 7344 / JCM 9153 / C-125) (Bacillus halodurans).